The sequence spans 456 residues: RNA polymerase II-associated protein 1 homolog (456 aa).

Residues 382–456 are disordered; the sequence is LRSVEGSLNE…PVEQLQNEED (75 aa). Residue serine 388 is modified to Phosphoserine. Positions 396–406 are enriched in basic and acidic residues; it reads EEKPAESREQL. Composition is skewed to polar residues over residues 408–433 and 441–456; these read SAEQ…QANS and GNTQ…NEED.

It belongs to the PAF1 family.

It is found in the cytoplasm. It localises to the nucleus. In Schizosaccharomyces pombe (strain 972 / ATCC 24843) (Fission yeast), this protein is RNA polymerase II-associated protein 1 homolog.